Consider the following 328-residue polypeptide: Ribosomal RNA small subunit methyltransferase H (328 aa).

Residues 35 to 37 (GSH), aspartate 60, phenylalanine 87, aspartate 113, and glutamine 120 each bind S-adenosyl-L-methionine.

The protein belongs to the methyltransferase superfamily. RsmH family.

It localises to the cytoplasm. It catalyses the reaction cytidine(1402) in 16S rRNA + S-adenosyl-L-methionine = N(4)-methylcytidine(1402) in 16S rRNA + S-adenosyl-L-homocysteine + H(+). Functionally, specifically methylates the N4 position of cytidine in position 1402 (C1402) of 16S rRNA. In Chlorobium chlorochromatii (strain CaD3), this protein is Ribosomal RNA small subunit methyltransferase H.